Here is a 397-residue protein sequence, read N- to C-terminus: MAKEKFDRSLPHCNVGTIGHVDHGKTTLTAALTRVCSEVFGSARVDFDKIDSAPEEKARGITINTAHVEYNSATRHYAHVDCPGHADYVKNMITGAAQMDGAILVCSAADGPMPQTREHILLSRQVGVPYIVVFLNKADLVDDAELLELVEMEVRDLLSTYDFPGDDTPIIIGSARMALEGKDDNEMGTTAVKKLVETLDSYIPQPERAVDKPFLMPIEDVFSISGRGTVVTGRVERGIVKVQDPLEIVGLRDTTVTTCTGVEMFRKLLDEGRAGENCGVLLRGTKRDDVERGQVLVKPGTVKPHTQFEAEIYVLSKEEGGRHTPFFKGYRPQFYFRTTDVTGSCELPEGVEMVMPGDNVKVSVTLIKPIAMEDGLRFAIREGGRTVGAGVVAKIIA.

Residues 10-207 form the tr-type G domain; that stretch reads LPHCNVGTIG…TLDSYIPQPE (198 aa). Residues 19–26 form a G1 region; that stretch reads GHVDHGKT. 19–26 serves as a coordination point for GTP; that stretch reads GHVDHGKT. T26 is a binding site for Mg(2+). The interval 60–64 is G2; it reads GITIN. Residues 81-84 form a G3 region; sequence DCPG. GTP contacts are provided by residues 81–85 and 136–139; these read DCPGH and NKAD. Residues 136–139 are G4; it reads NKAD. The interval 174 to 176 is G5; that stretch reads SAR.

Belongs to the TRAFAC class translation factor GTPase superfamily. Classic translation factor GTPase family. EF-Tu/EF-1A subfamily. Monomer.

It localises to the cytoplasm. It carries out the reaction GTP + H2O = GDP + phosphate + H(+). Functionally, GTP hydrolase that promotes the GTP-dependent binding of aminoacyl-tRNA to the A-site of ribosomes during protein biosynthesis. The sequence is that of Elongation factor Tu from Pseudomonas syringae pv. tomato (strain ATCC BAA-871 / DC3000).